The chain runs to 60 residues: Cytotoxin 1 (60 aa).

Disulfide bonds link cysteine 3-cysteine 21, cysteine 14-cysteine 38, cysteine 42-cysteine 53, and cysteine 54-cysteine 59.

It belongs to the three-finger toxin family. Short-chain subfamily. Type IA cytotoxin sub-subfamily. In terms of assembly, monomer in solution; Homodimer and oligomer in the presence of negatively charged lipids forming a pore with a size ranging between 20 and 30 angstroms. In terms of tissue distribution, expressed by the venom gland.

It localises to the secreted. The protein resides in the target cell membrane. In terms of biological role, basic protein that binds to cell membrane and depolarizes cardiomyocytes. This cytotoxin also possesses lytic activity on many other cells, including red blood cells. Interaction with sulfatides in the cell membrane induces pore formation and cell internalization and is responsible for cytotoxicity in cardiomyocytes. It targets the mitochondrial membrane and induces mitochondrial swelling and fragmentation. Inhibits protein kinases C. It binds to the integrin alpha-V/beta-3 with a moderate affinity. This is Cytotoxin 1 from Naja pallida (Red spitting cobra).